The sequence spans 764 residues: Palmitoyltransferase AKR1 (764 aa).

Disordered regions lie at residues 1–38 and 51–71; these read MVNELENVPRASTLTNEEQTVDPSNNDSQEDISLGDSN and SGNEEESGNEQVNHNDEAEED. Topologically, residues 1-321 are cytoplasmic; sequence MVNELENVPR…IKKWFKKSQH (321 aa). Polar residues predominate over residues 10-27; sequence RASTLTNEEQTVDPSNND. Phosphoserine occurs at positions 51 and 57. ANK repeat units lie at residues 72-102, 108-137, 142-171, 175-204, 213-242, and 246-275; these read PLLTRYHTACQRGDLATVKEMIHGKLLEVNN, EHITGLHWASINNRLSVVDFLVSQGADVNA, LHATPLHWAARYGYVYIVDFLLKHGADPTM, QGFNLLHLSVNSSNIMLVLYVLFNVVSKGL, KGRTSLLWAAYQGDSLTVAELLKFGASIKI, and EGFTPLHWGTVKGQPHVLKYLIQDGADFFQ. The chain crosses the membrane as a helical span at residues 322–341; the sequence is AKLVTFITPFLFLGIAFALF. The Lumenal portion of the chain corresponds to 342-346; it reads SHINP. Residues 347 to 364 traverse the membrane as a helical segment; sequence LFVIIVLFLLAIATNKGL. At 365-384 the chain is on the cytoplasmic side; the sequence is NKFVLPSYGRMGVHNVTLLR. A helical transmembrane segment spans residues 385–405; that stretch reads SPLLSGVFFGTLLWVTIVWFF. The Lumenal portion of the chain corresponds to 406–418; that stretch reads KVMPRTFSDEQYT. The chain crosses the membrane as a helical span at residues 419–439; that stretch reads NILMLVILVSVFYLFGQLVIM. The Cytoplasmic segment spans residues 440 to 513; that stretch reads DPGCLPEETD…FNDVGLKNHK (74 aa). One can recognise a DHHC domain in the interval 470–520; it reads NFCIETWIRKPLRSKFSPLNNAVVARFDHYCPWIFNDVGLKNHKAFIFFIT. The S-palmitoyl cysteine intermediate role is filled by Cys-500. A helical transmembrane segment spans residues 514-534; that stretch reads AFIFFITLMESGIFTFLALCL. At 535–570 the chain is on the lumenal side; the sequence is EYFDELEDAHEDTSQKNGKCFILGASDLCSGLIYDR. The chain crosses the membrane as a helical span at residues 571 to 591; that stretch reads FVFLILLWALLQSIWVASLIF. The Cytoplasmic portion of the chain corresponds to 592–764; sequence VQAFQICKGM…KDVEQGNDMV (173 aa).

It belongs to the DHHC palmitoyltransferase family. AKR/ZDHHC17 subfamily.

The protein resides in the early endosome membrane. The protein localises to the golgi apparatus membrane. It carries out the reaction L-cysteinyl-[protein] + hexadecanoyl-CoA = S-hexadecanoyl-L-cysteinyl-[protein] + CoA. In terms of biological role, palmitoyltransferase specific for casein kinase 1. Palmitoylates isoforms YCK1 and YCK2 at both C-terminal cysteine residues, which is required for their proper plasma membrane localization. Required for constitutive endocytosis of a-factor receptor STE3 and both constitutive and pheromone-induced endocytosis of alpha-factor receptor STE2. The sequence is that of Palmitoyltransferase AKR1 (AKR1) from Saccharomyces cerevisiae (strain ATCC 204508 / S288c) (Baker's yeast).